The primary structure comprises 209 residues: Ribosomal RNA large subunit methyltransferase E (209 aa).

Residues Gly-63, Trp-65, Asp-83, Asp-99, and Asp-124 each coordinate S-adenosyl-L-methionine. The active-site Proton acceptor is the Lys-164.

This sequence belongs to the class I-like SAM-binding methyltransferase superfamily. RNA methyltransferase RlmE family.

The protein resides in the cytoplasm. It carries out the reaction uridine(2552) in 23S rRNA + S-adenosyl-L-methionine = 2'-O-methyluridine(2552) in 23S rRNA + S-adenosyl-L-homocysteine + H(+). Its function is as follows. Specifically methylates the uridine in position 2552 of 23S rRNA at the 2'-O position of the ribose in the fully assembled 50S ribosomal subunit. The polypeptide is Ribosomal RNA large subunit methyltransferase E (Aliivibrio salmonicida (strain LFI1238) (Vibrio salmonicida (strain LFI1238))).